Reading from the N-terminus, the 76-residue chain is Conotoxin ArMKLT2-032 (76 aa).

An N-terminal signal peptide occupies residues M1 to G22. The propeptide occupies E23–R46. A Pyrrolidone carboxylic acid modification is found at Q47. 3 disulfide bridges follow: C48–C62, C55–C66, and C61–C73.

The protein belongs to the conotoxin O1 superfamily. As to expression, expressed by the venom duct.

It is found in the secreted. In Conus arenatus (Sand-dusted cone), this protein is Conotoxin ArMKLT2-032.